Consider the following 163-residue polypeptide: Putative H/ACA ribonucleoprotein complex subunit 2-like protein (163 aa).

This sequence belongs to the eukaryotic ribosomal protein eL8 family. Component of the small nucleolar ribonucleoprotein particle containing H/ACA-type snoRNAs (H/ACA snoRNPs).

The protein localises to the nucleus. Its subcellular location is the nucleolus. Functionally, required for ribosome biogenesis. Part of a complex which catalyzes pseudouridylation of rRNA. This involves the isomerization of uridine such that the ribose is subsequently attached to C5, instead of the normal N1. Pseudouridine ('psi') residues may serve to stabilize the conformation of rRNAs. This is Putative H/ACA ribonucleoprotein complex subunit 2-like protein from Caenorhabditis briggsae.